Here is a 495-residue protein sequence, read N- to C-terminus: Glucokinase (495 aa).

The Hexokinase domain maps to 3–483 (SALLDEAARI…SGVGAALIAL (481 aa)). The hexokinase small subdomain stretch occupies residues 57-206 (NGTEKGLYLA…GLPVRVAALV (150 aa)). K93 serves as a coordination point for ATP. Positions 149–175 (DLGFTFSFPVRQLGINKGTLIRWTKGF) are glucose-binding. The hexokinase large subdomain stretch occupies residues 207–472 (NDTVGTLMAR…KKIRIGISKD (266 aa)). 472–477 (DGSGVG) lines the ATP pocket.

Belongs to the hexokinase family. In terms of assembly, monomer.

The enzyme catalyses D-glucose + ATP = D-glucose 6-phosphate + ADP + H(+). It catalyses the reaction a D-hexose + ATP = a D-hexose 6-phosphate + ADP + H(+). The catalysed reaction is D-mannose + ATP = D-mannose 6-phosphate + ADP + H(+). It carries out the reaction D-glucosamine + ATP = D-glucosamine 6-phosphate + ADP + H(+). Its pathway is carbohydrate metabolism; hexose metabolism. It participates in carbohydrate degradation; glycolysis; D-glyceraldehyde 3-phosphate and glycerone phosphate from D-glucose: step 1/4. In terms of biological role, the enzyme has great affinity for glucose. Mannose, 2-deoxyglucose and glucosamine can serve as substrates. This Aspergillus niger protein is Glucokinase (glkA).